The following is a 363-amino-acid chain: Pyrimidine monooxygenase RutA (363 aa).

FMN contacts are provided by residues 49-50 (IK), N115, E124, 140-141 (RY), and S190.

This sequence belongs to the NtaA/SnaA/DszA monooxygenase family. RutA subfamily.

The enzyme catalyses uracil + FMNH2 + NADH + O2 = (Z)-3-ureidoacrylate + FMN + NAD(+) + H2O + H(+). It catalyses the reaction thymine + FMNH2 + NADH + O2 = (Z)-2-methylureidoacrylate + FMN + NAD(+) + H2O + H(+). Functionally, catalyzes the pyrimidine ring opening between N-3 and C-4 by an unusual flavin hydroperoxide-catalyzed mechanism, adding oxygen atoms in the process to yield ureidoacrylate peracid, that immediately reacts with FMN forming ureidoacrylate and FMN-N(5)-oxide. The FMN-N(5)-oxide reacts spontaneously with NADH to produce FMN. Requires the flavin reductase RutF to regenerate FMN in vivo. The protein is Pyrimidine monooxygenase RutA of Klebsiella pneumoniae (strain 342).